The primary structure comprises 410 residues: Regulator of microtubule dynamics protein 2 (410 aa).

Residues 10–27 (IFGIMVGTAGISLLLLWY) traverse the membrane as a helical segment. A Phosphoserine modification is found at serine 51. Residues 68–110 (FQERQLQILEKLNELLTNMEELKEEIRFLKETVPKLEEYIQDE) are a coiled coil. Serine 121 is modified (phosphoserine). Residues 122–131 (PQHRARKRRL) show a composition bias toward basic residues. The segment at 122 to 151 (PQHRARKRRLPTIQSSATSNSSEEAESEGG) is disordered. Threonine 139 bears the Phosphothreonine mark. Position 152 is a phosphotyrosine (tyrosine 152). 2 positions are modified to phosphothreonine: threonine 154 and threonine 157.

It belongs to the RMDN family. In terms of assembly, interacts with microtubules.

It localises to the membrane. The protein resides in the cytoplasm. The protein localises to the cytoskeleton. It is found in the spindle. Its subcellular location is the spindle pole. In Macaca fascicularis (Crab-eating macaque), this protein is Regulator of microtubule dynamics protein 2 (RMDN2).